The sequence spans 788 residues: Integrin beta-6 (788 aa).

A signal peptide spans M1–G21. In terms of domain architecture, PSI spans G22–Q71. At G22 to P709 the chain is on the extracellular side. 19 cysteine pairs are disulfide-bonded: C23-C41, C31-C454, C34-C59, C44-C70, C197-C204, C252-C293, C394-C406, C426-C452, C456-C476, C467-C479, C481-C490, C492-C519, C502-C517, C511-C522, C524-C537, C539-C560, C544-C558, C552-C563, and C565-C574. N-linked (GlcNAc...) asparagine glycans are attached at residues N48 and N97. The VWFA domain maps to Y131–L371. Positions 140, 142, and 144 each coordinate Mg(2+). Ca(2+)-binding residues include S144, D147, D148, and E179. 4 residues coordinate Ca(2+): N235, D237, P239, and E240. Residue E240 participates in Mg(2+) binding. An N-linked (GlcNAc...) asparagine glycan is attached at N260. Ca(2+) is bound by residues D271 and K355. N-linked (GlcNAc...) asparagine glycosylation is found at N387 and N396. 4 I-EGF domains span residues C456–E491, C492–Q538, C539–N575, and C576–E615. N-linked (GlcNAc...) asparagine glycosylation is found at N463 and N471. N541 carries an N-linked (GlcNAc...) asparagine glycan. Residue N575 is glycosylated (N-linked (GlcNAc...) asparagine). Disulfide bonds link C576–C599, C583–C597, C591–C602, C604–C614, C617–C620, C624–C670, C630–C649, C633–C645, and C678–C702. A helical membrane pass occupies residues M710–W730. Residues K731–T758 form an interaction with HAX1 region. Topologically, residues K731–C788 are cytoplasmic.

This sequence belongs to the integrin beta chain family. In terms of assembly, heterodimer of an alpha and a beta subunit. Interacts with FLNB. Interacts with HAX1. ITGAV:ITGB6 interacts with FBN1. ITGAV:ITGB6 interacts with TGFB1. (Microbial infection) Integrin ITGAV:ITGB6 interacts with coxsackievirus A9, coxsackievirus B1 capsid proteins. As to quaternary structure, (Microbial infection) Integrin ITGAV:ITGB6 interacts with herpes simplex virus-1/HHV-1 gH:gL proteins.

It localises to the cell membrane. The protein localises to the cell junction. Its subcellular location is the focal adhesion. Integrin alpha-V:beta-6 (ITGAV:ITGB6) is a receptor for fibronectin and cytotactin. It recognizes the sequence R-G-D in its ligands. Internalization of integrin alpha-V/beta-6 via clathrin-mediated endocytosis promotes carcinoma cell invasion. ITGAV:ITGB6 acts as a receptor for fibrillin-1 (FBN1) and mediates R-G-D-dependent cell adhesion to FBN1. Integrin alpha-V:beta-6 (ITGAV:ITGB6) mediates R-G-D-dependent release of transforming growth factor beta-1 (TGF-beta-1) from regulatory Latency-associated peptide (LAP), thereby playing a key role in TGF-beta-1 activation. Its function is as follows. (Microbial infection) Integrin ITGAV:ITGB6 acts as a receptor for Coxsackievirus A9 and Coxsackievirus B1. Functionally, (Microbial infection) Integrin ITGAV:ITGB6 acts as a receptor for Herpes simplex virus-1/HHV-1. The polypeptide is Integrin beta-6 (ITGB6) (Homo sapiens (Human)).